The sequence spans 560 residues: Platelet glycoprotein V (560 aa).

The first 16 residues, 1–16, serve as a signal peptide directing secretion; it reads MLRGTLLCAVLGLLRA. The 34-residue stretch at 17–50 folds into the LRRNT domain; sequence QPFPCPPACKCVFRDAAQCSGGDVARISALGLPT. Residues 17 to 523 are Extracellular-facing; that stretch reads QPFPCPPACK…KGQDHSPFWG (507 aa). N51 is a glycosylation site (N-linked (GlcNAc...) asparagine). LRR repeat units follow at residues 75–96, 99–120, 123–144, 147–168, 171–193, 195–216, 219–240, 243–264, 267–288, 291–312, 340–361, 364–385, and 388–409; these read VLQRLMISDSHISAVAPGTFSD, KLKTLRLSRNKITHLPGALLDK, LLEQLFLDHNALRGIDQNMFQK, NLQELALNQNQLDFLPASLFTN, NLKLLDLSGNNLTHLPKGLLGAQ, KLERLLLHSNRLVSLDSGLLNS, ALTELQFHRNHIRSIAPGAFDR, NLSSLTLSRNHLAFLPSALFLH, NLTLLTLFENPLAELPGVLFGE, GLQELWLNRTQLRTLPAAAFRN, ELQVLALHSNGLTALPDGLLRG, KLRQVSLRRNRLRALPRALFRN, and SLESVQLDHNQLETLPGDVFGA. N181 carries an N-linked (GlcNAc...) (complex) asparagine glycan. Residue N243 is glycosylated (N-linked (GlcNAc...) (complex) asparagine). N-linked (GlcNAc...) asparagine glycans are attached at residues N267, N298, and N312. An N-linked (GlcNAc...) asparagine glycan is attached at N385. Positions 421–474 constitute an LRRCT domain; sequence NSWRCDCGLGPFLGWLRQHLGLVGGEEPPRCAGPGAHAGLPLWALPGGDAECPG. The interval 469-498 is disordered; it reads DAECPGPRGPPPRPAADSSSEAPVHPALAP. An N-linked (GlcNAc...) asparagine glycan is attached at N499. A helical membrane pass occupies residues 524–544; that stretch reads FYFLLLAVQAMITVIIVFAMI. Residues 545-560 are Cytoplasmic-facing; that stretch reads KIGQLFRKLIRERALG.

The N-terminus is blocked. In terms of tissue distribution, platelets and megakaryocytes.

It is found in the membrane. The GPIb-V-IX complex functions as the vWF receptor and mediates vWF-dependent platelet adhesion to blood vessels. The adhesion of platelets to injured vascular surfaces in the arterial circulation is a critical initiating event in hemostasis. The chain is Platelet glycoprotein V (GP5) from Homo sapiens (Human).